A 181-amino-acid chain; its full sequence is NAD(P)H-quinone oxidoreductase subunit I, chloroplastic (181 aa).

4Fe-4S ferredoxin-type domains follow at residues 55–84 (GRIH…VDWE) and 95–124 (KNYS…MTEE). The [4Fe-4S] cluster site is built by C64, C67, C70, C74, C104, C107, C110, and C114.

The protein belongs to the complex I 23 kDa subunit family. In terms of assembly, NDH is composed of at least 16 different subunits, 5 of which are encoded in the nucleus. The cofactor is [4Fe-4S] cluster.

The protein localises to the plastid. It is found in the chloroplast thylakoid membrane. It catalyses the reaction a plastoquinone + NADH + (n+1) H(+)(in) = a plastoquinol + NAD(+) + n H(+)(out). It carries out the reaction a plastoquinone + NADPH + (n+1) H(+)(in) = a plastoquinol + NADP(+) + n H(+)(out). NDH shuttles electrons from NAD(P)H:plastoquinone, via FMN and iron-sulfur (Fe-S) centers, to quinones in the photosynthetic chain and possibly in a chloroplast respiratory chain. The immediate electron acceptor for the enzyme in this species is believed to be plastoquinone. Couples the redox reaction to proton translocation, and thus conserves the redox energy in a proton gradient. In Angiopteris evecta (Mule's foot fern), this protein is NAD(P)H-quinone oxidoreductase subunit I, chloroplastic.